Here is a 158-residue protein sequence, read N- to C-terminus: Large ribosomal subunit protein mL50 (158 aa).

The protein belongs to the mitochondrion-specific ribosomal protein mL50 family. In terms of assembly, component of the mitochondrial ribosome large subunit (39S) which comprises a 16S rRNA and about 50 distinct proteins.

It is found in the mitochondrion. This chain is Large ribosomal subunit protein mL50 (MRPL50), found in Pongo abelii (Sumatran orangutan).